The primary structure comprises 251 residues: Capsid protein (251 aa).

The interval 1 to 27 (MPKRDLPWRSMPGTSKTSRNANYSPRA) is disordered. Residues 3–20 (KRDLPWRSMPGTSKTSRN) carry the Bipartite nuclear localization signal motif. Residues 12 to 23 (PGTSKTSRNANY) are compositionally biased toward polar residues. Positions 35–49 (KASEWVHRPMYRKPR) match the Nuclear localization signal motif. A zinc finger lies at 63 to 80 (CEGPCKVQSYEQRHDISH). The Nuclear export signal motif lies at 96–117 (ITHRVGKRFCVKSVYILGKIWM). Positions 195–242 (KRFWKVNNHVVYNHQEAGKYENHTENALLLYMACTHASNPVYATLKIR) match the Bipartite nuclear localization signal motif.

It belongs to the geminiviridae capsid protein family. Homomultimer. Binds to single-stranded and double-stranded viral DNA. Interacts (via nuclear localization signals) with host importin alpha-1a.

It localises to the virion. The protein resides in the host nucleus. Encapsidates the viral DNA into characteristic twinned ('geminate') particles. Binds the genomic viral ssDNA and shuttles it into and out of the cell nucleus. The CP of bipartite geminiviruses is not required for cell-to-cell or systemic movement. The protein is Capsid protein of Abutilon (Upland cotton).